The sequence spans 917 residues: Protein FAN (917 aa).

The GRAM domain maps to 176-247 (RLARTSFDKN…QDVRRIYKRR (72 aa)). Positions 189–286 (NISEKLHMEC…DRDDLYFYIA (98 aa)) constitute a BEACH-type PH domain. One can recognise a BEACH domain in the interval 290-575 (EHHVAEHTAE…QLFVTPHPRR (286 aa)). 6 WD repeats span residues 628–658 (IHKE…KMFS), 670–700 (FSNM…YFYS), 712–740 (GHDD…KVWS), 761–791 (EHDV…NIWD), 803–833 (CHSG…NVID), and 884–914 (GHTG…IFWK).

In terms of tissue distribution, ubiquitous.

Couples the p55 TNF-receptor (TNF-R55 / TNFR1) to neutral sphingomyelinase (N-SMASE). Specifically binds to the N-smase activation domain of TNF-R55. May regulate ceramide production by N-SMASE. The sequence is that of Protein FAN (NSMAF) from Homo sapiens (Human).